The sequence spans 152 residues: Endoribonuclease YbeY (152 aa).

Zn(2+)-binding residues include His-113, His-117, and His-123.

Belongs to the endoribonuclease YbeY family. Zn(2+) is required as a cofactor.

It is found in the cytoplasm. In terms of biological role, single strand-specific metallo-endoribonuclease involved in late-stage 70S ribosome quality control and in maturation of the 3' terminus of the 16S rRNA. This chain is Endoribonuclease YbeY, found in Janthinobacterium sp. (strain Marseille) (Minibacterium massiliensis).